A 659-amino-acid chain; its full sequence is MGEFKIQSKFKPTGDQPKAIDTLVQSIENGNRGQTLLGVTGSGKTFTMANIIERTQKPTLILAHNKTLAAQLCAEFKEFFPDNIVEYFVSYYDYYQPEAYVPQTDTFIEKDASINDEIDKLRHSATSALLERRDVIIVASVSCIYGLGNPEEYKKLTISLRPGMIKDRDEVIKKLIEIQYERNDIDFARGTFRVRGDNLDIIPSSSSSKGIRIEFFGDEIDRIREFDVLTGNIIGERQHVSITPASHFAASEETLEKSIRVIEDELEDRLKVLTAEDKILEAQRLKQRTNYDIEMIREMGYCQGIENYSRILDGRMPGTPPQTLLDYFPEDFLMFIDESHVTLPQVRAMYAGDRSRKTSLVEFGFRLPCAFDNRPLKFSEFESKINQVVFVSATPGEYELDHSKVVAEQIIRPTGLLDPVIEIRPIQGQIDDLYGEIQRTVQRGFRVLITTLTKRMAEDLTKYLKDLNVKATYMHSDIDTLERMKIIRELRLGEVDVLIGINLLREGLDIPEVALVAILDADKEGFLRSETSLIQTIGRAARNSESKVIMYADNITKSMDKSIKETERRRVIQMEYNEEHNITPTTVIKGVRDIIEATKVSEEKENYEDEVKKAAKKDIPVEKLIEQYEEEMKEAAKNLQFERAAELRDIIKDLKENSK.

Residues 25-182 (QSIENGNRGQ…KKLIEIQYER (158 aa)) form the Helicase ATP-binding domain. 38 to 45 (GVTGSGKT) contacts ATP. A Beta-hairpin motif is present at residues 91 to 114 (YYDYYQPEAYVPQTDTFIEKDASI). Residues 429-582 (QIDDLYGEIQ…QMEYNEEHNI (154 aa)) enclose the Helicase C-terminal domain. The 36-residue stretch at 622–657 (EKLIEQYEEEMKEAAKNLQFERAAELRDIIKDLKEN) folds into the UVR domain.

This sequence belongs to the UvrB family. In terms of assembly, forms a heterotetramer with UvrA during the search for lesions. Interacts with UvrC in an incision complex.

It is found in the cytoplasm. The UvrABC repair system catalyzes the recognition and processing of DNA lesions. A damage recognition complex composed of 2 UvrA and 2 UvrB subunits scans DNA for abnormalities. Upon binding of the UvrA(2)B(2) complex to a putative damaged site, the DNA wraps around one UvrB monomer. DNA wrap is dependent on ATP binding by UvrB and probably causes local melting of the DNA helix, facilitating insertion of UvrB beta-hairpin between the DNA strands. Then UvrB probes one DNA strand for the presence of a lesion. If a lesion is found the UvrA subunits dissociate and the UvrB-DNA preincision complex is formed. This complex is subsequently bound by UvrC and the second UvrB is released. If no lesion is found, the DNA wraps around the other UvrB subunit that will check the other stand for damage. This Clostridium perfringens (strain ATCC 13124 / DSM 756 / JCM 1290 / NCIMB 6125 / NCTC 8237 / Type A) protein is UvrABC system protein B.